The primary structure comprises 335 residues: ATP-dependent 6-phosphofructokinase (335 aa).

Gly11 contacts ATP. 21 to 25 (RAVVR) is an ADP binding site. ATP-binding positions include 72-73 (RY) and 102-105 (GDGS). Asp103 is a binding site for Mg(2+). Substrate is bound at residue 125–127 (TID). Asp127 functions as the Proton acceptor in the catalytic mechanism. Position 154 (Arg154) interacts with ADP. Residues Arg162 and 169-171 (MGR) each bind substrate. Residues 185 to 187 (GAD) and 213 to 215 (KKH) contribute to the ADP site. Residues Glu222, Arg244, and 250 to 253 (HIQR) each bind substrate.

The protein belongs to the phosphofructokinase type A (PFKA) family. ATP-dependent PFK group I subfamily. Prokaryotic clade 'B1' sub-subfamily. In terms of assembly, homotetramer. The cofactor is Mg(2+).

The protein localises to the cytoplasm. The enzyme catalyses beta-D-fructose 6-phosphate + ATP = beta-D-fructose 1,6-bisphosphate + ADP + H(+). It functions in the pathway carbohydrate degradation; glycolysis; D-glyceraldehyde 3-phosphate and glycerone phosphate from D-glucose: step 3/4. Its activity is regulated as follows. Allosterically activated by ADP and other diphosphonucleosides, and allosterically inhibited by phosphoenolpyruvate. Its function is as follows. Catalyzes the phosphorylation of D-fructose 6-phosphate to fructose 1,6-bisphosphate by ATP, the first committing step of glycolysis. This Streptococcus pneumoniae (strain CGSP14) protein is ATP-dependent 6-phosphofructokinase.